Consider the following 302-residue polypeptide: MATDDFFSLQREYWRQVAESDGFDIESVQIPPSMYGRINGLIPHNCEINTPLPYRVLGKHYAKLGLHRYNMLKGTKFEFGRLMKFNMLQNCVASFYITLEAYDYGVPGTSHPQTFQVRIDEKIFGSLDLTVSIARRTTDEVTTKKPFIHHYHGGAVADNIIFKGELPDWPSDDVLKDRERFYVIMNESEWRATAWISLYLELVLCAHDKFITNTDLSRLSIEKVAIETSIGDALLYERLEAKSANVYIWFKRLEKPRVPQQVFVTGMDVERKAIIRRVMDSTGYLTLVGKLCGGVTKVRQFN.

At Ala2 the chain carries N-acetylalanine.

This sequence belongs to the UPF0725 (EMB2204) family.

This is UPF0725 protein At1g23960 from Arabidopsis thaliana (Mouse-ear cress).